Reading from the N-terminus, the 141-residue chain is Lutropin subunit beta (141 aa).

The first 21 residues, 1-21 (MERYQELTVLLLLLLLEGGSG), serve as a signal peptide directing secretion. 6 disulfide bridges follow: Cys30-Cys78, Cys44-Cys93, Cys47-Cys131, Cys55-Cys109, Cys59-Cys111, and Cys114-Cys121. A glycan (N-linked (GlcNAc...) asparagine) is linked at Asn34.

The protein belongs to the glycoprotein hormones subunit beta family. As to quaternary structure, heterodimer of a common alpha chain and a unique beta chain which confers biological specificity to thyrotropin, lutropin, follitropin and gonadotropin.

The protein localises to the secreted. In terms of biological role, promotes spermatogenesis and ovulation by stimulating the testes and ovaries to synthesize steroids. This Monodelphis domestica (Gray short-tailed opossum) protein is Lutropin subunit beta (LHB).